The sequence spans 378 residues: Erythronate-4-phosphate dehydrogenase (378 aa).

Residues Ser-45 and Thr-66 each contribute to the substrate site. NAD(+)-binding residues include Asp-146 and Thr-175. Arg-208 is a catalytic residue. Asp-232 is a binding site for NAD(+). Glu-237 is a catalytic residue. Residue His-254 is the Proton donor of the active site. An NAD(+)-binding site is contributed by Gly-257. Tyr-258 contributes to the substrate binding site.

It belongs to the D-isomer specific 2-hydroxyacid dehydrogenase family. PdxB subfamily. As to quaternary structure, homodimer.

The protein localises to the cytoplasm. It catalyses the reaction 4-phospho-D-erythronate + NAD(+) = (R)-3-hydroxy-2-oxo-4-phosphooxybutanoate + NADH + H(+). It functions in the pathway cofactor biosynthesis; pyridoxine 5'-phosphate biosynthesis; pyridoxine 5'-phosphate from D-erythrose 4-phosphate: step 2/5. In terms of biological role, catalyzes the oxidation of erythronate-4-phosphate to 3-hydroxy-2-oxo-4-phosphonooxybutanoate. The protein is Erythronate-4-phosphate dehydrogenase of Escherichia coli O81 (strain ED1a).